We begin with the raw amino-acid sequence, 360 residues long: MKWKKSLTGLSSYKPGKREEEVMAELGLTKITKLSSNENPLGTSPKVAELQADSSVETEIYPDGWASSLRTVVADFYQLEEEELIFTAGVDELIELLTRVLLDTTKNTVMATPTFVQYRQNALIEGAEVREIPLLVDGAHDLDGMLNAIDDNTTIVWVCNPNNPTGNYIDLADIQAFLDKVPSDVLVVLDEAYIEYVTPQPEKHEKLIRTYKNLIITRTFSKIYGLASARVGYGIADKAIIEQLNIVRPPFNTTSIGQKLAIEAIKDQAFIEACRTSNANGIKQYEAFAKRFEQVKLYPANGNFVLIDLGIEAGTIFSYLEKNGYITRSGAALGFPTAVRITIGKEEENSAVIALLEKLL.

Lysine 222 carries the post-translational modification N6-(pyridoxal phosphate)lysine.

It belongs to the class-II pyridoxal-phosphate-dependent aminotransferase family. Histidinol-phosphate aminotransferase subfamily. As to quaternary structure, homodimer. Requires pyridoxal 5'-phosphate as cofactor.

The enzyme catalyses L-histidinol phosphate + 2-oxoglutarate = 3-(imidazol-4-yl)-2-oxopropyl phosphate + L-glutamate. Its pathway is amino-acid biosynthesis; L-histidine biosynthesis; L-histidine from 5-phospho-alpha-D-ribose 1-diphosphate: step 7/9. This Listeria monocytogenes serotype 4b (strain CLIP80459) protein is Histidinol-phosphate aminotransferase.